The primary structure comprises 442 residues: Trigger factor (442 aa).

Positions 162 to 247 constitute a PPIase FKBP-type domain; sequence GDQVTIDAIG…IKAVHTSEPT (86 aa).

This sequence belongs to the FKBP-type PPIase family. Tig subfamily.

The protein resides in the cytoplasm. The enzyme catalyses [protein]-peptidylproline (omega=180) = [protein]-peptidylproline (omega=0). Functionally, involved in protein export. Acts as a chaperone by maintaining the newly synthesized protein in an open conformation. Functions as a peptidyl-prolyl cis-trans isomerase. This Rickettsia canadensis (strain McKiel) protein is Trigger factor.